The sequence spans 374 residues: Queuine tRNA-ribosyltransferase (374 aa).

Catalysis depends on D92, which acts as the Proton acceptor. Substrate is bound by residues 92-96 (DSGGY), D146, Q193, and G220. The interval 251-257 (GVGKPDD) is RNA binding. D270 (nucleophile) is an active-site residue. The interval 275–279 (TRSGR) is RNA binding; important for wobble base 34 recognition. 4 residues coordinate Zn(2+): C308, C310, C313, and H339.

It belongs to the queuine tRNA-ribosyltransferase family. As to quaternary structure, homodimer. Within each dimer, one monomer is responsible for RNA recognition and catalysis, while the other monomer binds to the replacement base PreQ1. Zn(2+) is required as a cofactor.

It carries out the reaction 7-aminomethyl-7-carbaguanine + guanosine(34) in tRNA = 7-aminomethyl-7-carbaguanosine(34) in tRNA + guanine. The protein operates within tRNA modification; tRNA-queuosine biosynthesis. Functionally, catalyzes the base-exchange of a guanine (G) residue with the queuine precursor 7-aminomethyl-7-deazaguanine (PreQ1) at position 34 (anticodon wobble position) in tRNAs with GU(N) anticodons (tRNA-Asp, -Asn, -His and -Tyr). Catalysis occurs through a double-displacement mechanism. The nucleophile active site attacks the C1' of nucleotide 34 to detach the guanine base from the RNA, forming a covalent enzyme-RNA intermediate. The proton acceptor active site deprotonates the incoming PreQ1, allowing a nucleophilic attack on the C1' of the ribose to form the product. After dissociation, two additional enzymatic reactions on the tRNA convert PreQ1 to queuine (Q), resulting in the hypermodified nucleoside queuosine (7-(((4,5-cis-dihydroxy-2-cyclopenten-1-yl)amino)methyl)-7-deazaguanosine). In Novosphingobium aromaticivorans (strain ATCC 700278 / DSM 12444 / CCUG 56034 / CIP 105152 / NBRC 16084 / F199), this protein is Queuine tRNA-ribosyltransferase.